The chain runs to 152 residues: MAKMHTKRKGKSSSTRPNRTEPPEWCKIGADEVTTITLDLWKQGVSTSEIGMILRDRYGVPDAKLVTGKKITTILKENNVAPNLPEDLTNLIVKALGLRKHLSTNKKDVHNKRALNLTESKIRRLVKYYKQEKVLPRDWFYKPETAEMMITR.

Positions 1–11 (MAKMHTKRKGK) are enriched in basic residues. The segment at 1–24 (MAKMHTKRKGKSSSTRPNRTEPPE) is disordered.

The protein belongs to the universal ribosomal protein uS15 family. As to quaternary structure, part of the 30S ribosomal subunit.

The sequence is that of Small ribosomal subunit protein uS15 from Methanosarcina mazei (strain ATCC BAA-159 / DSM 3647 / Goe1 / Go1 / JCM 11833 / OCM 88) (Methanosarcina frisia).